The following is a 234-amino-acid chain: Large ribosomal subunit protein uL1 (234 aa).

It belongs to the universal ribosomal protein uL1 family. Part of the 50S ribosomal subunit.

Functionally, binds directly to 23S rRNA. The L1 stalk is quite mobile in the ribosome, and is involved in E site tRNA release. Protein L1 is also a translational repressor protein, it controls the translation of the L11 operon by binding to its mRNA. In Yersinia pseudotuberculosis serotype O:1b (strain IP 31758), this protein is Large ribosomal subunit protein uL1.